Here is a 106-residue protein sequence, read N- to C-terminus: Urease subunit beta (106 aa).

It belongs to the urease beta subunit family. In terms of assembly, heterotrimer of UreA (gamma), UreB (beta) and UreC (alpha) subunits. Three heterotrimers associate to form the active enzyme.

The protein resides in the cytoplasm. It catalyses the reaction urea + 2 H2O + H(+) = hydrogencarbonate + 2 NH4(+). It functions in the pathway nitrogen metabolism; urea degradation; CO(2) and NH(3) from urea (urease route): step 1/1. The polypeptide is Urease subunit beta (Prochlorococcus marinus (strain MIT 9301)).